The chain runs to 808 residues: Auxin response factor 4 (808 aa).

A compositionally biased stretch (pro residues) spans 1–13; sequence MPPAAMAPPPPPQ. The disordered stretch occupies residues 1–20; the sequence is MPPAAMAPPPPPQGSSTGDP. The segment at residues 129–231 is a DNA-binding region (TF-B3); that stretch reads FCKTLTASDT…ELRVGVRRAM (103 aa). Over residues 342–352 the composition is skewed to basic and acidic residues; it reads PSTIPRPDRVS. 3 disordered regions span residues 342 to 433, 661 to 691, and 778 to 808; these read PSTI…DSDV, TAGT…VAST, and QKMN…KSDN. The span at 402–432 shows a compositional bias: polar residues; the sequence is AQAQRSQNSTVLQGQEQMTLRSNLTESNDSD. The PB1 domain occupies 692 to 785; the sequence is RSCTKVHKQG…EVQKMNSKSN (94 aa). Residues 787–799 are compositionally biased toward basic and acidic residues; the sequence is PRKDDSSENEKGH.

Belongs to the ARF family. As to quaternary structure, homodimers and heterodimers. Expressed in roots, culms, leaves and young panicles.

Its subcellular location is the nucleus. In terms of biological role, auxin response factors (ARFs) are transcriptional factors that bind specifically to the DNA sequence 5'-TGTCTC-3' found in the auxin-responsive promoter elements (AuxREs). The protein is Auxin response factor 4 (ARF4) of Oryza sativa subsp. japonica (Rice).